The chain runs to 192 residues: Ribose 1,5-bisphosphate phosphokinase PhnN (192 aa).

15–22 (GPSGAGKD) contacts ATP.

The protein belongs to the ribose 1,5-bisphosphokinase family.

The catalysed reaction is alpha-D-ribose 1,5-bisphosphate + ATP = 5-phospho-alpha-D-ribose 1-diphosphate + ADP. Its pathway is metabolic intermediate biosynthesis; 5-phospho-alpha-D-ribose 1-diphosphate biosynthesis; 5-phospho-alpha-D-ribose 1-diphosphate from D-ribose 5-phosphate (route II): step 3/3. Catalyzes the phosphorylation of ribose 1,5-bisphosphate to 5-phospho-D-ribosyl alpha-1-diphosphate (PRPP). This chain is Ribose 1,5-bisphosphate phosphokinase PhnN, found in Brucella melitensis biotype 2 (strain ATCC 23457).